Consider the following 1793-residue polypeptide: Protein TIC 214 (1793 aa).

Transmembrane regions (helical) follow at residues 11-31, 64-84, 90-112, 129-149, 172-192, and 222-242; these read LVSL…YYGF, FITG…HIAL, ITVI…NFLN, IFFQ…SSIL, VGWL…LVWI, and IFLI…PPIY. Positions 1504 to 1524 are disordered; it reads DIEEDYGESDSKKGGKDKNKK.

This sequence belongs to the TIC214 family. As to quaternary structure, part of the Tic complex.

It is found in the plastid. The protein resides in the chloroplast inner membrane. Its function is as follows. Involved in protein precursor import into chloroplasts. May be part of an intermediate translocation complex acting as a protein-conducting channel at the inner envelope. In Lotus japonicus (Lotus corniculatus var. japonicus), this protein is Protein TIC 214.